The primary structure comprises 785 residues: Endonuclease MutS2 (785 aa).

Residue 332-339 (GPNTGGKT) coordinates ATP. The Smr domain occupies 710 to 785 (VDLRGMDSEE…GNGVTVVELK (76 aa)).

The protein belongs to the DNA mismatch repair MutS family. MutS2 subfamily. As to quaternary structure, homodimer. Binds to stalled ribosomes, contacting rRNA.

Its function is as follows. Endonuclease that is involved in the suppression of homologous recombination and thus may have a key role in the control of bacterial genetic diversity. Functionally, acts as a ribosome collision sensor, splitting the ribosome into its 2 subunits. Detects stalled/collided 70S ribosomes which it binds and splits by an ATP-hydrolysis driven conformational change. Acts upstream of the ribosome quality control system (RQC), a ribosome-associated complex that mediates the extraction of incompletely synthesized nascent chains from stalled ribosomes and their subsequent degradation. Probably generates substrates for RQC. In Clostridium novyi (strain NT), this protein is Endonuclease MutS2.